The sequence spans 57 residues: Stress response protein (57 aa).

Residues 6–10 (RKERR) carry the Nuclear localization signal motif.

As to expression, mesophyll protoplasts.

The protein localises to the nucleus. Stress response. May play a role in the reentering of protoplasts into the cell cycle. In Nicotiana sylvestris (Wood tobacco), this protein is Stress response protein.